A 355-amino-acid chain; its full sequence is MRGERGSKPSVYSLFFDGVLTRTDPERAHHGAFRAIRAARPVLASRRTPGEQVTALGLTFPNVLGLAAGFDKNAVGIDALAALGFGHVEIGTVTGEPQPGNPKPRLFRLPEDRAIVNRMGFNNDGAEVVARRLAERSRGRDRLGHRSRPVLGVNIGKSKVVPDDDQAAVEADYEKSARLLAPYADYLVVNVSSPNTPGLRNLQAVEKLRPLLEHVRRTADAVTRTRVPLLVKIAPDLADEDVLGVADLALAIGLDGIIATNTTISRAGLRTPADRVGEIGAGGLSGRPLTGRALEVLRLLRERVGPDLTLVGVGGISTVQDARDRLTAGADLLQAYSAFVYEGPLWPRRIVRGVA.

Residues 68–72 (AGFDK) and Thr92 each bind FMN. Position 72 (Lys72) interacts with substrate. Residue 117-121 (NRMGF) coordinates substrate. Asn154 and Asn190 together coordinate FMN. Residue Asn190 participates in substrate binding. The Nucleophile role is filled by Ser193. Substrate is bound at residue Asn195. FMN is bound by residues Lys232 and Thr260. 261 to 262 (NT) lines the substrate pocket. FMN-binding positions include Gly286, Gly315, and 336 to 337 (YS).

It belongs to the dihydroorotate dehydrogenase family. Type 2 subfamily. Monomer. FMN is required as a cofactor.

The protein localises to the cell membrane. It catalyses the reaction (S)-dihydroorotate + a quinone = orotate + a quinol. The protein operates within pyrimidine metabolism; UMP biosynthesis via de novo pathway; orotate from (S)-dihydroorotate (quinone route): step 1/1. Catalyzes the conversion of dihydroorotate to orotate with quinone as electron acceptor. This is Dihydroorotate dehydrogenase (quinone) from Nocardioides sp. (strain ATCC BAA-499 / JS614).